Reading from the N-terminus, the 557-residue chain is Glucose-6-phosphate isomerase (557 aa).

Glu361 serves as the catalytic Proton donor. Active-site residues include His392 and Lys520.

Belongs to the GPI family.

The protein resides in the cytoplasm. The catalysed reaction is alpha-D-glucose 6-phosphate = beta-D-fructose 6-phosphate. It participates in carbohydrate biosynthesis; gluconeogenesis. It functions in the pathway carbohydrate degradation; glycolysis; D-glyceraldehyde 3-phosphate and glycerone phosphate from D-glucose: step 2/4. Its function is as follows. Catalyzes the reversible isomerization of glucose-6-phosphate to fructose-6-phosphate. This chain is Glucose-6-phosphate isomerase, found in Acinetobacter venetianus (strain ATCC 31012 / DSM 23050 / BCRC 14357 / CCUG 45561 / CIP 110063 / KCTC 2702 / LMG 19082 / RAG-1).